The following is a 190-amino-acid chain: Protein GrpE (190 aa).

Residues 1–31 (MTETPNTSSEEIQTSEPSSDNELQTLQQENA) are compositionally biased toward polar residues. The disordered stretch occupies residues 1–34 (MTETPNTSSEEIQTSEPSSDNELQTLQQENANLK).

This sequence belongs to the GrpE family. In terms of assembly, homodimer.

The protein resides in the cytoplasm. In terms of biological role, participates actively in the response to hyperosmotic and heat shock by preventing the aggregation of stress-denatured proteins, in association with DnaK and GrpE. It is the nucleotide exchange factor for DnaK and may function as a thermosensor. Unfolded proteins bind initially to DnaJ; upon interaction with the DnaJ-bound protein, DnaK hydrolyzes its bound ATP, resulting in the formation of a stable complex. GrpE releases ADP from DnaK; ATP binding to DnaK triggers the release of the substrate protein, thus completing the reaction cycle. Several rounds of ATP-dependent interactions between DnaJ, DnaK and GrpE are required for fully efficient folding. The polypeptide is Protein GrpE (Chlamydia muridarum (strain MoPn / Nigg)).